Here is a 362-residue protein sequence, read N- to C-terminus: 3-dehydroquinate synthase (362 aa).

Residues aspartate 71–lysine 76, glycine 105–aspartate 109, threonine 129–threonine 130, lysine 142, lysine 151, and cysteine 169–threonine 172 each bind NAD(+). The Zn(2+) site is built by glutamate 184, histidine 247, and histidine 264.

It belongs to the sugar phosphate cyclases superfamily. Dehydroquinate synthase family. It depends on Co(2+) as a cofactor. Zn(2+) is required as a cofactor. NAD(+) serves as cofactor.

Its subcellular location is the cytoplasm. The enzyme catalyses 7-phospho-2-dehydro-3-deoxy-D-arabino-heptonate = 3-dehydroquinate + phosphate. Its pathway is metabolic intermediate biosynthesis; chorismate biosynthesis; chorismate from D-erythrose 4-phosphate and phosphoenolpyruvate: step 2/7. In terms of biological role, catalyzes the conversion of 3-deoxy-D-arabino-heptulosonate 7-phosphate (DAHP) to dehydroquinate (DHQ). In Escherichia coli O6:K15:H31 (strain 536 / UPEC), this protein is 3-dehydroquinate synthase.